The following is a 375-amino-acid chain: MTDVEGLLDGQFTLGIEEEFQIVDAETRELRSYVSQLLEGGPGHELLRGRARPEMHQSVVETGTGVCRDIRQARGELVELRGSLNALARRGGMRIVAAGTHPFSDWKKQDITDGERYRCIVEDLQDVARANLIFGLHVHVGVKDREVAMALANQVRYFLPHILALSTSSPFWLGRPSGLKSTRSEIFKRFPRTGIPGLFESHGHFQRFVDLLVKTGCIDNAKKIWWDVRPHPFFDTVEVRICDMTTRLDDTVALAALVQAVMGKLYLLYRRNLGFREYRQELIEENKWRAVRYGLDGQLIDFGKQEQVPVRHLVGELLEFVQESAEIFGSQRELERVRRILHEGTSADRQLAVYARTKSFHAVVDDLIEQSSLGL.

It belongs to the glutamate--cysteine ligase type 2 family. YbdK subfamily.

It catalyses the reaction L-cysteine + L-glutamate + ATP = gamma-L-glutamyl-L-cysteine + ADP + phosphate + H(+). In terms of biological role, ATP-dependent carboxylate-amine ligase which exhibits weak glutamate--cysteine ligase activity. The protein is Putative glutamate--cysteine ligase 2 of Sorangium cellulosum (strain So ce56) (Polyangium cellulosum (strain So ce56)).